Consider the following 332-residue polypeptide: D-amino acid oxidase (332 aa).

10 residues coordinate FAD: A8, G9, I10, T39, T40, A45, G46, L47, V161, and S180. D-proline contacts are provided by Y218 and R274. 2 residues coordinate D-serine: Y218 and R274. 5 residues coordinate FAD: R274, G305, G306, G308, and T310. D-proline is bound at residue G306. G306 lines the D-serine pocket. Positions 330–332 match the Microbody targeting signal motif; it reads AKL.

Belongs to the DAMOX/DASOX family. It depends on FAD as a cofactor.

Its subcellular location is the peroxisome matrix. The catalysed reaction is a D-alpha-amino acid + O2 + H2O = a 2-oxocarboxylate + H2O2 + NH4(+). It carries out the reaction D-alanine + O2 + H2O = pyruvate + H2O2 + NH4(+). The enzyme catalyses D-arginine + O2 + H2O = 5-guanidino-2-oxopentanoate + H2O2 + NH4(+). It catalyses the reaction D-asparagine + O2 + H2O = 2-oxosuccinamate + H2O2 + NH4(+). The catalysed reaction is D-cysteine + O2 + H2O = 2-oxo-3-sulfanylpropanoate + H2O2 + NH4(+). It carries out the reaction D-glutamine + O2 + H2O = 2-oxoglutaramate + H2O2 + NH4(+). The enzyme catalyses D-isoleucine + O2 + H2O = (R)-3-methyl-2-oxopentanoate + H2O2 + NH4(+). It catalyses the reaction D-leucine + O2 + H2O = 4-methyl-2-oxopentanoate + H2O2 + NH4(+). The catalysed reaction is D-lysine + O2 + H2O = 6-amino-2-oxohexanoate + H2O2 + NH4(+). It carries out the reaction D-methionine + O2 + H2O = 4-methylsulfanyl-2-oxobutanoate + H2O2 + NH4(+). The enzyme catalyses D-phenylalanine + O2 + H2O = 3-phenylpyruvate + H2O2 + NH4(+). It catalyses the reaction D-proline + O2 = 1-pyrroline-2-carboxylate + H2O2. The catalysed reaction is D-valine + O2 + H2O = 3-methyl-2-oxobutanoate + H2O2 + NH4(+). It carries out the reaction D-histidine + O2 + H2O = 3-(imidazol-5-yl)pyruvate + H2O2 + NH4(+). The enzyme catalyses D-tyrosine + O2 + H2O = 3-(4-hydroxyphenyl)pyruvate + H2O2 + NH4(+). It catalyses the reaction D-serine + O2 + H2O = 3-hydroxypyruvate + H2O2 + NH4(+). The catalysed reaction is D-threonine + O2 + H2O = (S)-3-hydroxy-2-oxobutanoate + H2O2 + NH4(+). It carries out the reaction D-tryptophan + O2 + H2O = indole-3-pyruvate + H2O2 + NH4(+). Catalyzes the oxidative deamination of D-amino acids with broad substrate specificity. Could be responsible for the degradation of diet-derived D-alanine in the intestine. Maintains the asexual state of worms and represses early ovarian development. Following sexual induction, the enzyme is required for differentiation of oogonia into oocytes in the developing ovaries. The chain is D-amino acid oxidase from Dugesia ryukyuensis (Freshwater planarian flatworm).